Reading from the N-terminus, the 263-residue chain is Hydroxyethylthiazole kinase 1 (263 aa).

Met-42 is a substrate binding site. Residues Lys-118 and Thr-164 each contribute to the ATP site. Gly-191 is a binding site for substrate.

The protein belongs to the Thz kinase family. Mg(2+) serves as cofactor.

The catalysed reaction is 5-(2-hydroxyethyl)-4-methylthiazole + ATP = 4-methyl-5-(2-phosphooxyethyl)-thiazole + ADP + H(+). It participates in cofactor biosynthesis; thiamine diphosphate biosynthesis; 4-methyl-5-(2-phosphoethyl)-thiazole from 5-(2-hydroxyethyl)-4-methylthiazole: step 1/1. Catalyzes the phosphorylation of the hydroxyl group of 4-methyl-5-beta-hydroxyethylthiazole (THZ). This is Hydroxyethylthiazole kinase 1 from Clostridium botulinum (strain Langeland / NCTC 10281 / Type F).